Here is a 578-residue protein sequence, read N- to C-terminus: Rhamnogalacturonate lyase (578 aa).

An N-terminal signal peptide occupies residues 1–27 (MHMNKPLQAWRTPLLTLIFVLPLTATG).

This sequence belongs to the polysaccharide lyase 4 family.

Its subcellular location is the secreted. The enzyme catalyses Endotype eliminative cleavage of L-alpha-rhamnopyranosyl-(1-&gt;4)-alpha-D-galactopyranosyluronic acid bonds of rhamnogalacturonan I domains in ramified hairy regions of pectin leaving L-rhamnopyranose at the reducing end and 4-deoxy-4,5-unsaturated D-galactopyranosyluronic acid at the non-reducing end.. Its function is as follows. Degrades the rhamnogalacturonan I (RG-I) backbone of pectin. Is required for the full virulence of E.chrysanthemi strain 3937 as it is involved in rotting of plant tissue. The protein is Rhamnogalacturonate lyase (rhiE) of Dickeya dadantii (strain 3937) (Erwinia chrysanthemi (strain 3937)).